Here is a 264-residue protein sequence, read N- to C-terminus: 3-methyl-2-oxobutanoate hydroxymethyltransferase (264 aa).

Residues Asp-45 and Asp-84 each coordinate Mg(2+). 3-methyl-2-oxobutanoate contacts are provided by residues 45-46, Asp-84, and Lys-112; that span reads DS. Glu-114 is a Mg(2+) binding site. Glu-181 serves as the catalytic Proton acceptor.

The protein belongs to the PanB family. In terms of assembly, homodecamer; pentamer of dimers. Requires Mg(2+) as cofactor.

It localises to the cytoplasm. It carries out the reaction 3-methyl-2-oxobutanoate + (6R)-5,10-methylene-5,6,7,8-tetrahydrofolate + H2O = 2-dehydropantoate + (6S)-5,6,7,8-tetrahydrofolate. It functions in the pathway cofactor biosynthesis; (R)-pantothenate biosynthesis; (R)-pantoate from 3-methyl-2-oxobutanoate: step 1/2. Functionally, catalyzes the reversible reaction in which hydroxymethyl group from 5,10-methylenetetrahydrofolate is transferred onto alpha-ketoisovalerate to form ketopantoate. In Escherichia coli O1:K1 / APEC, this protein is 3-methyl-2-oxobutanoate hydroxymethyltransferase.